The chain runs to 427 residues: MNQTNLDFLATSDPALAAIIDRELQRQRTHIELIASENFTSAAVMAAQGSVLTNKYAEGLPGKRYYGGCEFVDQAETLAISRVKELFGAAHANVQPHSGAQANFAVFLTLLQPGDTIMGMDLSHGGHLTHGSPVNVSGKWFEVAHYGVEKETGRLDYDKIRQQALEVKPKLLICGYSAYPRQIEFDKFRAIADEVGAYLMADIAHIAGLVASGHHPSPLPYCDVVTTTTHKTLRGPRGGLIMTNNEELGKKFDKSVFPGTQGGPLEHVITAKAVAFGEALKPEFKVYSGQVIANAQAMADQLQKRGFDLVSGGTDNHLMLVDLRSIAMTGKVGDQLLGEINITANKNTVPFDPESPFVTSGLRLGSPAMTTRGMQEDEFRTIANIIADRLLSPEDEGVKADCLRRVSELCAGFPLYDHLRIPVAVIA.

(6S)-5,6,7,8-tetrahydrofolate is bound by residues Leu122 and 126–128 (GHL). N6-(pyridoxal phosphate)lysine is present on Lys231. Residues Glu247 and 355–357 (SPF) each bind (6S)-5,6,7,8-tetrahydrofolate.

The protein belongs to the SHMT family. Homodimer. It depends on pyridoxal 5'-phosphate as a cofactor.

The protein resides in the cytoplasm. It catalyses the reaction (6R)-5,10-methylene-5,6,7,8-tetrahydrofolate + glycine + H2O = (6S)-5,6,7,8-tetrahydrofolate + L-serine. It participates in one-carbon metabolism; tetrahydrofolate interconversion. It functions in the pathway amino-acid biosynthesis; glycine biosynthesis; glycine from L-serine: step 1/1. Functionally, catalyzes the reversible interconversion of serine and glycine with tetrahydrofolate (THF) serving as the one-carbon carrier. This reaction serves as the major source of one-carbon groups required for the biosynthesis of purines, thymidylate, methionine, and other important biomolecules. Also exhibits THF-independent aldolase activity toward beta-hydroxyamino acids, producing glycine and aldehydes, via a retro-aldol mechanism. In Synechocystis sp. (strain ATCC 27184 / PCC 6803 / Kazusa), this protein is Serine hydroxymethyltransferase.